Reading from the N-terminus, the 309-residue chain is MVATSFKLNNGLEIPAVGLGTWQSKAGEVKAAVSYALQIGYKLIDGAYCYGNEDEVGEGLKEAFAAGVKREDIFVVTKIWATYNTRVVLGLDKSLRSLGLDYVDLLLVHWPVLLNPEGNHDKFPTLPDGKRDVIWDYNHVDGWKQMEAVLATGKTKSIGVSNYSKKYLEQLLPHATVIPAVNQIENHPSLPQQEIVDFCKEKGIHIMAYSPLGSTGSPLMSADPVVKIAEKKGISPTTVLLSYHVNRGSTVLAKSVTPARIKANLEIVDLDDEDMKLLNDYSNDLASKGELKRYVYPPFGIDFGFPDKS.

Tyr50 acts as the Proton donor in catalysis. Position 109 (His109) interacts with substrate. 210–264 is an NADP(+) binding site; the sequence is SPLGSTGSPLMSADPVVKIAEKKGISPTTVLLSYHVNRGSTVLAKSVTPARIKAN.

Belongs to the aldo/keto reductase family.

It carries out the reaction L-galactonate + NADP(+) = aldehydo-D-galacturonate + NADPH + H(+). It participates in carbohydrate acid metabolism. Functionally, mediates the reduction of D-galacturonate to L-galactonate, the first step in D-galacturonate catabolic process. Also has activity with D-glucuronate and DL-glyceraldehyde. No activity is observed with D-glucose, D-fructose, D-xylose, D-galactose, L-arabinose or D-mannose. Activity is seen only with NADPH and not with NADH. The chain is D-galacturonate reductase (gar1) from Hypocrea jecorina (Trichoderma reesei).